We begin with the raw amino-acid sequence, 815 residues long: Serotype-specific mannosyltransferase WbdA (815 aa).

The interval 1–374 (MSRAIIENAG…WANTAHLAIE (374 aa)) is alpha-(1-&gt;2)-mannosyltransferase. An alpha-(1-&gt;3)-mannosyltransferase region spans residues 431-804 (KLLVDISVLA…WKQSAEFLLK (374 aa)).

The protein belongs to the glycosyltransferase group 1 family. Glycosyltransferase 4 subfamily. Monomer. Interacts with the C-terminal region of WbdD.

The protein resides in the cell inner membrane. It catalyses the reaction [alpha-D-Man-(1-&gt;3)-alpha-D-Man-(1-&gt;3)-alpha-D-Man-(1-&gt;2)-alpha-D-Man-(1-&gt;2)](n)-alpha-D-Man-(1-&gt;3)-alpha-D-Man-(1-&gt;3)-alpha-D-Man-(1-&gt;3)-alpha-D-GlcNAc-di-trans,octa-cis-undecaprenyl diphosphate + 2 GDP-alpha-D-mannose = alpha-D-Man-(1-&gt;2)-alpha-D-Man-(1-&gt;2)-[alpha-D-Man-(1-&gt;3)-alpha-D-Man-(1-&gt;3)-alpha-D-Man-(1-&gt;2)-alpha-D-Man-(1-&gt;2)](n)-alpha-D-Man-(1-&gt;3)-alpha-D-Man-(1-&gt;3)-alpha-D-Man-(1-&gt;3)-alpha-D-GlcNAc-di-trans,octa-cis-undecaprenyl diphosphate + 2 GDP + 2 H(+). The catalysed reaction is alpha-D-Man-(1-&gt;2)-alpha-D-Man-(1-&gt;2)-[alpha-D-Man-(1-&gt;3)-alpha-D-Man-(1-&gt;3)-alpha-D-Man-(1-&gt;2)-alpha-D-Man-(1-&gt;2)](n)-alpha-D-Man-(1-&gt;3)-alpha-D-Man-(1-&gt;3)-alpha-D-Man-(1-&gt;3)-alpha-D-GlcNAc-di-trans,octa-cis-undecaprenyl diphosphate + 2 GDP-alpha-D-mannose = [alpha-D-Man-(1-&gt;3)-alpha-D-Man-(1-&gt;3)-alpha-D-Man-(1-&gt;2)-alpha-D-Man-(1-&gt;2)](n+1)-alpha-D-Man-(1-&gt;3)-alpha-D-Man-(1-&gt;3)-alpha-D-Man-(1-&gt;3)-alpha-D-GlcNAc-di-trans,octa-cis-undecaprenyl diphosphate + 2 GDP + 2 H(+). It functions in the pathway bacterial outer membrane biogenesis; LPS O-antigen biosynthesis. Its function is as follows. Mannosyltransferase involved in the biosynthesis of the repeat unit of the lipopolysaccharide (LPS) O-antigen region. Catalyzes the polymerization of a tetrasaccharide repeat unit containing two alpha-(1-&gt;3)- and two alpha-(1-&gt;2)-linked mannopyranose residues. This Escherichia coli protein is Serotype-specific mannosyltransferase WbdA.